The sequence spans 232 residues: Ribonuclease 3 (232 aa).

The 132-residue stretch at 6–137 (QEMLKRDFNI…FIGALYLDQG (132 aa)) folds into the RNase III domain. Mg(2+) is bound at residue Glu-50. Asp-54 is a catalytic residue. 2 residues coordinate Mg(2+): Asp-123 and Glu-126. Glu-126 is a catalytic residue. Residues 163 to 232 (DNKTELQEVL…AYQALKKLRK (70 aa)) enclose the DRBM domain.

It belongs to the ribonuclease III family. Homodimer. Requires Mg(2+) as cofactor.

The protein localises to the cytoplasm. It catalyses the reaction Endonucleolytic cleavage to 5'-phosphomonoester.. Digests double-stranded RNA. Involved in the processing of primary rRNA transcript to yield the immediate precursors to the large and small rRNAs (23S and 16S). Processes some mRNAs, and tRNAs when they are encoded in the rRNA operon. Processes pre-crRNA and tracrRNA of type II CRISPR loci if present in the organism. The protein is Ribonuclease 3 of Ligilactobacillus salivarius (strain UCC118) (Lactobacillus salivarius).